Here is a 598-residue protein sequence, read N- to C-terminus: Fructan 6-exohydrolase (598 aa).

Residues 1 to 30 form the signal peptide; sequence MAARLPLAACVVAFHLCLLLSSLVRSPSTA. Aspartate 65 is a catalytic residue. 3 N-linked (GlcNAc...) asparagine glycosylation sites follow: asparagine 93, asparagine 288, and asparagine 351. Cysteine 451 and cysteine 497 are joined by a disulfide. Residue asparagine 572 is glycosylated (N-linked (GlcNAc...) asparagine).

This sequence belongs to the glycosyl hydrolase 32 family. In terms of tissue distribution, expressed in leaves, stems, roots and inflorescences. Maximum expression is detected in stems, particularly the penultimate internode.

The enzyme catalyses Hydrolysis of terminal, non-reducing (2-&gt;6)-linked beta-D-fructofuranose residues in fructans.. With respect to regulation, not inhibited by sucrose. Hydrolyzes levan-type beta-(2-&gt;6)-linked fructans to fructose, but not inulin-type beta-(2-&gt;1)-linked fructans. The chain is Fructan 6-exohydrolase from Triticum aestivum (Wheat).